The chain runs to 363 residues: Peptide-N(4)-(N-acetyl-beta-glucosaminyl)asparagine amidase (363 aa).

The Zn(2+) site is built by cysteine 129, cysteine 132, cysteine 165, and cysteine 168. The active-site Nucleophile is the cysteine 191. Active-site residues include histidine 218 and aspartate 235. Glutamate 238 is a substrate binding site. The disordered stretch occupies residues 325 to 363; that stretch reads RGKTQETKSESVSAASKSSNRGRESGSADWKAQRGEDGK. A compositionally biased stretch (low complexity) spans 334-343; it reads ESVSAASKSS. Residues 345-363 are compositionally biased toward basic and acidic residues; that stretch reads RGRESGSADWKAQRGEDGK.

The protein belongs to the transglutaminase-like superfamily. PNGase family. Interacts with RAD23 subunit of 26S proteasome. Requires Zn(2+) as cofactor.

The protein resides in the cytoplasm. The protein localises to the nucleus. It catalyses the reaction Hydrolysis of an N(4)-(acetyl-beta-D-glucosaminyl)asparagine residue in which the glucosamine residue may be further glycosylated, to yield a (substituted) N-acetyl-beta-D-glucosaminylamine and a peptide containing an aspartate residue.. Inhibited by Z-VAD-fmk, a well-known caspase inhibitor. Also inhibited by Man9GlcNAc2-iodoacetoamide. Both molecules inhibit enzyme activity through covalent binding of the carbohydrate to the single Cys-191 residue. Its function is as follows. Specifically deglycosylates the denatured form of N-linked glycoproteins in the cytoplasm and assists their proteasome-mediated degradation. Cleaves the beta-aspartyl-glucosamine (GlcNAc) of the glycan and the amide side chain of Asn, converting Asn to Asp. Prefers proteins containing high-mannose over those bearing complex type oligosaccharides. Can recognize misfolded proteins in the endoplasmic reticulum that are exported to the cytosol to be destroyed and deglycosylate them, while it has no activity toward native proteins. Deglycosylation is a prerequisite for subsequent proteasome-mediated degradation of some, but not all, misfolded glycoproteins. Involved in the formation of free oligosaccharide in cytosol. The polypeptide is Peptide-N(4)-(N-acetyl-beta-glucosaminyl)asparagine amidase (PNG1) (Saccharomyces cerevisiae (strain ATCC 204508 / S288c) (Baker's yeast)).